The primary structure comprises 523 residues: NAD(P) transhydrogenase subunit alpha (523 aa).

The Cytoplasmic portion of the chain corresponds to 1-411 (MKIGAPREIF…AEIATFRKQT (411 aa)). Residues 127-130 (QKMD), Val-177, 197-199 (DVR), and Gly-229 contribute to the NAD(+) site. 2 helical membrane-spanning segments follow: residues 412 to 432 (VSQVAMLAVGTALLLFVGMYA) and 433 to 455 (PPSFMAHFIVFALACFVGFQVIW). Residues 456-464 (NVSHSLHTP) are Cytoplasmic-facing. A helical transmembrane segment spans residues 465-485 (LMAVTNAISGIVILGALLQIG). The Periplasmic segment spans residues 486-489 (SGNV). Residues 490 to 510 (LVVLLAAISVLIATINIVGGF) form a helical membrane-spanning segment. The Cytoplasmic portion of the chain corresponds to 511 to 523 (LVTRRMLAMFQKS).

Belongs to the AlaDH/PNT family. As to quaternary structure, heterodimer of an alpha (PntA) and a beta (PntB) chain.

It localises to the cell inner membrane. It carries out the reaction NAD(+) + NADPH + H(+)(in) = NADH + NADP(+) + H(+)(out). The transhydrogenation between NADH and NADP is coupled to respiration and ATP hydrolysis and functions as a proton pump across the membrane. This is NAD(P) transhydrogenase subunit alpha from Cereibacter sphaeroides (Rhodobacter sphaeroides).